Consider the following 299-residue polypeptide: Myozenin-1 (299 aa).

A disordered region spans residues 1–34; that stretch reads MPLSGTPAPNKKRKSSKLIMELTGGGQESSGLNL. Phosphoserine is present on serine 82. Positions 102 to 174 are disordered; it reads GQGFSYSKSN…TGSGDQAGGE (73 aa). Composition is skewed to gly residues over residues 112 to 125 and 137 to 173; these read GRGG…GSAG and SGSG…QAGG.

Belongs to the myozenin family. As to quaternary structure, interacts with ACTN2, ACTN3, FLNA, FLNB, FLNC, LDB3, PPP3CA and TCAP. Interacts via its C-terminal region with MYOT. Expressed primarily in skeletal muscle. Detected at lower levels in heart, prostate and pancreas.

It localises to the nucleus. The protein resides in the cell projection. Its subcellular location is the pseudopodium. Functionally, myozenins may serve as intracellular binding proteins involved in linking Z-disk proteins such as alpha-actinin, gamma-filamin, TCAP/telethonin, LDB3/ZASP and localizing calcineurin signaling to the sarcomere. Plays an important role in the modulation of calcineurin signaling. May play a role in myofibrillogenesis. In Homo sapiens (Human), this protein is Myozenin-1.